The chain runs to 123 residues: Large ribosomal subunit protein bL12 (123 aa).

It belongs to the bacterial ribosomal protein bL12 family. As to quaternary structure, homodimer. Part of the ribosomal stalk of the 50S ribosomal subunit. Forms a multimeric L10(L12)X complex, where L10 forms an elongated spine to which 2 to 4 L12 dimers bind in a sequential fashion. Binds GTP-bound translation factors.

Its function is as follows. Forms part of the ribosomal stalk which helps the ribosome interact with GTP-bound translation factors. Is thus essential for accurate translation. The protein is Large ribosomal subunit protein bL12 of Neisseria gonorrhoeae (strain NCCP11945).